Here is a 51-residue protein sequence, read N- to C-terminus: Perinerin (51 aa).

Functionally, antibacterial activity against both Gram-negative and Gram-positive bacteria. Shows marked activity against P.aeruginosa, B.megaterium, A.viridans, moderate activity against E.coli K-12, S.aureus and M.luteus, and minor activity against P.vulgaris. Antifungal activity against P.heliothis. The chain is Perinerin from Perinereis aibuhitensis (Korean lugworm).